The primary structure comprises 691 residues: DNA ligase (691 aa).

Residues aspartate 53–aspartate 57, serine 102–leucine 103, and glutamate 135 each bind NAD(+). Lysine 137 functions as the N6-AMP-lysine intermediate in the catalytic mechanism. Arginine 158, glutamate 195, lysine 310, and lysine 334 together coordinate NAD(+). Residues cysteine 428, cysteine 431, cysteine 446, and cysteine 452 each contribute to the Zn(2+) site. One can recognise a BRCT domain in the interval serine 613 to glutamate 691.

The protein belongs to the NAD-dependent DNA ligase family. LigA subfamily. Mg(2+) serves as cofactor. It depends on Mn(2+) as a cofactor.

It catalyses the reaction NAD(+) + (deoxyribonucleotide)n-3'-hydroxyl + 5'-phospho-(deoxyribonucleotide)m = (deoxyribonucleotide)n+m + AMP + beta-nicotinamide D-nucleotide.. Its function is as follows. DNA ligase that catalyzes the formation of phosphodiester linkages between 5'-phosphoryl and 3'-hydroxyl groups in double-stranded DNA using NAD as a coenzyme and as the energy source for the reaction. It is essential for DNA replication and repair of damaged DNA. The protein is DNA ligase of Psychrobacter arcticus (strain DSM 17307 / VKM B-2377 / 273-4).